A 517-amino-acid polypeptide reads, in one-letter code: Tyrosine-protein kinase Src42A (517 aa).

The segment at 1 to 47 (MGNCLTTQKGEPDKPADRIKLDDPPTIGVGVGVPQIPMPSHAGQPPE) is disordered. Over residues 10–23 (GEPDKPADRIKLDD) the composition is skewed to basic and acidic residues. Positions 63–124 (ANAKIFVALY…PSNYVAKLKS (62 aa)) constitute an SH3 domain. Residues 130 to 222 (WYFRKIKRIE…GLCVNLCKPC (93 aa)) enclose the SH2 domain. Residues 248–504 (LKFVRKLGSG…TLQWKLEDFY (257 aa)) enclose the Protein kinase domain. Residues 254–262 (LGSGQFGDV) and K276 contribute to the ATP site. Residue D370 is the Proton acceptor of the active site.

The protein belongs to the protein kinase superfamily. Tyr protein kinase family. SRC subfamily. In terms of tissue distribution, ubiquitous in early embryos, in stages 13-16 expression is seen in visceral mesoderm, hindgut, brain, anal pads and ventral ganglions. In larvae, expression is in CNS, wing disk, leg disk and photoreceptor precursors in the eye-antenna disks posterior to the morphogenetic furrow.

The catalysed reaction is L-tyrosyl-[protein] + ATP = O-phospho-L-tyrosyl-[protein] + ADP + H(+). Functionally, required directly or indirectly for the phosphorylation of drpr which is necessary for the interaction of drpr with shark and subsequent glial phagocytic activity. Together with drpr and shark, promotes the migration of macrophages to sites of wounding as part of a signaling cascade where Src42A detects production of hydrogen peroxide at wound sites which triggers phosphorylation of drpr and subsequent recruitment and activation of shark. Essential for correct eye morphogenesis (ommatidial R7 neuron formation) which requires the Ras1/MAPK signal transduction pathway. May be involved in the regulation of cytoskeleton organization and cell-cell contacts in developing ommatidia. Involved in phosphorylation of Dscam1, a cell surface receptor involved in targeting of growing axons during eye morphogenesis, and its interaction partner the SH2/SH3 adapter protein dock/dreadlocks. During embryogenesis, involved in regulation of dorsal closure where it may have a role in activating the JNK pathway in leading edge cells during this process. In Drosophila melanogaster (Fruit fly), this protein is Tyrosine-protein kinase Src42A.